A 325-amino-acid polypeptide reads, in one-letter code: Delta(1)-pyrroline-2-carboxylate reductase (325 aa).

This sequence belongs to the ornithine cyclodeaminase/mu-crystallin family.

It catalyses the reaction L-proline + NAD(+) = 1-pyrroline-2-carboxylate + NADH + H(+). The catalysed reaction is L-proline + NADP(+) = 1-pyrroline-2-carboxylate + NADPH + H(+). Functionally, catalyzes the reduction of Delta(1)-pyrroline-2-carboxylate (Pyr2C) to L-proline, using preferentially NADPH over NADH as the electron donor. May be involved in a degradation pathway that converts trans-3-hydroxy-L-proline (t3LHyp) to L-proline. The chain is Delta(1)-pyrroline-2-carboxylate reductase from Bacillus cereus (strain ZK / E33L).